Consider the following 135-residue polypeptide: ATP synthase epsilon chain (135 aa).

It belongs to the ATPase epsilon chain family. F-type ATPases have 2 components, CF(1) - the catalytic core - and CF(0) - the membrane proton channel. CF(1) has five subunits: alpha(3), beta(3), gamma(1), delta(1), epsilon(1). CF(0) has three main subunits: a, b and c.

It is found in the cellular thylakoid membrane. In terms of biological role, produces ATP from ADP in the presence of a proton gradient across the membrane. The chain is ATP synthase epsilon chain from Prochlorococcus marinus (strain MIT 9211).